The primary structure comprises 474 residues: MAIRKIIRDLLITKQPLLRQLFHQRVLRANARSEFLPAIGYTSHRRFSVFTEFSKNIRGEAHSNPEFERTVKELKERTEEFKGVTEDLKVRTKQTTEKLYKQADGVWTEAESAAKKVSSSVKDKLSAASEEVKESFKLGKEENAESASSSGTRASQGEKQQSGSTEELHTFFAKFKSSLSSPKVSEVFYRLKEAKPFDIVKQALDIVKDELRGNPSRKKFLEHTPPPPFTGERSMRTEMVVTQTKQSKLQQKWESFREKMQGSPVFKRLSGMSEPVVNKSQEIAEDVREIWETSDNPIVHKIQDMNEKFLKETDSASTYKEIRSRDPSFSLPDFAAEIEEVIKPVLNAYSEGDVETLKKYCSKEVIERCTAERTAYQTHGVLFDNKLLHISEVSVSVTKMMGDSPIIIAKFQTQEIYCVRDENGEIQEGGQDTIHTVYHEWAMQQVETTELGEDAIYPIWRLREMCRNGVQALI.

Residues 1 to 54 (MAIRKIIRDLLITKQPLLRQLFHQRVLRANARSEFLPAIGYTSHRRFSVFTEFS) constitute a mitochondrion transit peptide. Residues 68 to 88 (ERTVKELKERTEEFKGVTEDL) adopt a coiled-coil conformation. Basic and acidic residues predominate over residues 132 to 143 (VKESFKLGKEEN). The segment at 132–165 (VKESFKLGKEENAESASSSGTRASQGEKQQSGST) is disordered. Polar residues predominate over residues 145 to 165 (ESASSSGTRASQGEKQQSGST).

It belongs to the Tim44 family. Probable component of the PAM complex at least composed of a mitochondrial HSP70 protein, TIMM44 and TIMM14. The complex interacts with the TIMM23 component of the TIM17:23 complex. Expressed in roots, flowers, young cotyledons and leaves.

It is found in the mitochondrion inner membrane. Essential component of the PAM complex, a complex required for the translocation of transit peptide-containing proteins from the inner membrane into the mitochondrial matrix in an ATP-dependent manner. Recruits mitochondrial HSP70 to drive protein translocation into the matrix using ATP as an energy source. This chain is Mitochondrial import inner membrane translocase subunit TIM44-1 (TIM44-1), found in Arabidopsis thaliana (Mouse-ear cress).